Consider the following 79-residue polypeptide: Calcium/calmodulin-dependent protein kinase II inhibitor 2 (79 aa).

The tract at residues 1-21 is disordered; the sequence is MSEILPYGEDKMGRFGADPEG. The inhibitory domain stretch occupies residues 43–69; sequence KRPPKLGQIGRAKRVVIEDDRIDDVLK.

The protein belongs to the CAMK2N family. As to quaternary structure, interacts with CAMK2A and CAMK2B in the presence of Ca(2+)/calmodulin or after autophosphorylation.

The protein resides in the nucleus. It is found in the cytoplasm. It localises to the cytosol. Its subcellular location is the synapse. Functionally, potent and specific cellular inhibitor of CaM-kinase II (CAMK2). Traps Ca(2+)/calmodulin on CAMK2. The sequence is that of Calcium/calmodulin-dependent protein kinase II inhibitor 2 (Camk2n2) from Mus musculus (Mouse).